A 308-amino-acid polypeptide reads, in one-letter code: Acetaldehyde dehydrogenase 1 (308 aa).

10 to 13 (SGNI) serves as a coordination point for NAD(+). Catalysis depends on C128, which acts as the Acyl-thioester intermediate. NAD(+)-binding positions include 159–167 (SAGPGTRAN) and N285.

It belongs to the acetaldehyde dehydrogenase family.

The enzyme catalyses acetaldehyde + NAD(+) + CoA = acetyl-CoA + NADH + H(+). This Salinispora arenicola (strain CNS-205) protein is Acetaldehyde dehydrogenase 1.